The sequence spans 932 residues: Protocadherin gamma-A3 (932 aa).

The first 29 residues, 1 to 29 (MTNCLSFRNGRGLALLCALLGTLCETGSG), serve as a signal peptide directing secretion. 6 Cadherin domains span residues 30–133 (QIRY…APNF), 134–242 (PTEE…PPMF), 243–347 (TQPE…APEI), 348–452 (TITS…PPTF), 453–562 (PHLS…APEI), and 570–682 (DGST…EPSA). The Extracellular segment spans residues 30 to 692 (QIRYSVSEEL…KPNDSDLTLY (663 aa)). Residues asparagine 265, asparagine 419, and asparagine 545 are each glycosylated (N-linked (GlcNAc...) asparagine). Residue asparagine 685 is glycosylated (N-linked (GlcNAc...) asparagine). The chain crosses the membrane as a helical span at residues 693 to 713 (LVVAVAAVSCVFLALVIVLLA). Residues 714 to 932 (HRLRRWHKSR…KKKSGKKEKK (219 aa)) lie on the Cytoplasmic side of the membrane. Disordered stretches follow at residues 806–841 (LLQQ…WPNN) and 902–932 (ATLT…KEKK). Over residues 922 to 932 (NKKKSGKKEKK) the composition is skewed to basic residues.

Its subcellular location is the cell membrane. In terms of biological role, potential calcium-dependent cell-adhesion protein. May be involved in the establishment and maintenance of specific neuronal connections in the brain. This is Protocadherin gamma-A3 (PCDHGA3) from Pan troglodytes (Chimpanzee).